The primary structure comprises 213 residues: StAR-related lipid transfer protein 5 (213 aa).

One can recognise an START domain in the interval 1–213 (MDPSWATQES…LQKAVRKFHH (213 aa)).

As to expression, expressed in most tissues, with highest levels in liver and in kidney.

May be involved in the intracellular transport of sterols or other lipids. May bind cholesterol or other sterols. The polypeptide is StAR-related lipid transfer protein 5 (Stard5) (Mus musculus (Mouse)).